A 68-amino-acid polypeptide reads, in one-letter code: Large ribosomal subunit protein bL31 (68 aa).

Positions 17, 19, 37, and 40 each coordinate Zn(2+).

This sequence belongs to the bacterial ribosomal protein bL31 family. Type A subfamily. Part of the 50S ribosomal subunit. Zn(2+) serves as cofactor.

In terms of biological role, binds the 23S rRNA. The sequence is that of Large ribosomal subunit protein bL31 from Dehalococcoides mccartyi (strain ATCC BAA-2266 / KCTC 15142 / 195) (Dehalococcoides ethenogenes (strain 195)).